A 269-amino-acid chain; its full sequence is Thyroxine 5-deiodinase (269 aa).

Over 1–14 (MLPAPHTCCRLLQQ) the chain is Cytoplasmic. The chain crosses the membrane as a helical; Signal-anchor for type II membrane protein span at residues 15–35 (LLACCLLLPRFLLTVLLLWLL). Residues 36–269 (DFPCVRRRVI…TGNGALVIQV (234 aa)) are Extracellular-facing. The active site involves U133. A non-standard amino acid (selenocysteine) is located at residue U133.

The protein belongs to the iodothyronine deiodinase family. In terms of assembly, monomer. Homodimer. May undergo minor heretodimerization with DIO1 and DIO2.

Its subcellular location is the cell membrane. It localises to the endosome membrane. It catalyses the reaction 3,3',5'-triiodo-L-thyronine + iodide + A + H(+) = L-thyroxine + AH2. It carries out the reaction 3,3'-diiodo-L-thyronine + iodide + A + H(+) = 3,3',5-triiodo-L-thyronine + AH2. The catalysed reaction is 3-iodo-L-thyronine + iodide + A + H(+) = 3,5-diiodo-L-thyronine + AH2. The enzyme catalyses L-thyronine + iodide + A + H(+) = 3-iodo-L-thyronine + AH2. It catalyses the reaction 3',5'-diiodo-L-thyronine + iodide + A + H(+) = 3,3',5'-triiodo-L-thyronine + AH2. It carries out the reaction 3'-iodo-L-thyronine + iodide + A + H(+) = 3,3'-diiodo-L-thyronine + AH2. The catalysed reaction is 3,3',5'-triiodothyronamine + iodide + A + H(+) = 3,3',5,5'-tetraiodothyronamine + AH2. The enzyme catalyses 3',5'-diiodothyronamine + iodide + A + H(+) = 3,3',5'-triiodothyronamine + AH2. It catalyses the reaction 3,3'-diiodothyronamine + iodide + A + H(+) = 3,3',5-triiodothyronamine + AH2. It carries out the reaction 3-iodothyronamine + iodide + A + H(+) = 3,5-diiodothyronamine + AH2. The catalysed reaction is 3'-iodothyronamine + iodide + A + H(+) = 3,3'-diiodothyronamine + AH2. The enzyme catalyses thyronamine + iodide + A + H(+) = 3-iodothyronamine + AH2. In terms of biological role, plays a crucial role in the metabolism of thyroid hormones (TH) and has specific roles in TH activation and inactivation by deiodination. Catalyzes the deiodination of L-thyroxine (T4) to 3,3',5'-triiodothyronine (rT3), 3,5-diiodothyronine (3,5-T2) to 3-monoiodothyronine (3-T1), rT3 to 3',5'-diiodothyronine (3',5'-T2) and 3,3'-diiodothyronine (3,3'-T2) to 3'-monoiodothyronine (3'-T1) via inner-ring deiodination (IRD). Catalyzes the deiodination of 3,5,3'-triiodothyronine (T3) to 3,3'-diiodothyronine (3,3'-T2) via IRD. Catalyzes the deiodination of 3-T1 to L-thyronine (T0) via outer-ring deiodination (ORD). Catalyzes the tyrosyl ring deiodinations of 3,3',5,5'-tetraiodothyronamine, 3,3',5'-triiodothyronamine, 3,5,3'-triiodothyronamine, 3,5-diiodothyronamine, 3,3'-diiodothyronamine and 3-iodothyronamine. The sequence is that of Thyroxine 5-deiodinase (dio3) from Aquarana catesbeiana (American bullfrog).